The following is a 295-amino-acid chain: Large ribosomal subunit protein uL15m (295 aa).

Residues 1-20 (MAGTARGCGTSLDLLRSLPR) constitute a mitochondrion transit peptide. The segment at 21-67 (VSLANLKPSPNSRKRERRPRDRRRGRKCGRGHKGERQRGTRPRLGFE) is disordered. Residues 32–51 (SRKRERRPRDRRRGRKCGRG) show a composition bias toward basic residues.

The protein belongs to the universal ribosomal protein uL15 family. Component of the mitochondrial ribosome large subunit (39S) which comprises a 16S rRNA and about 50 distinct proteins.

The protein resides in the mitochondrion. The protein is Large ribosomal subunit protein uL15m (Mrpl15) of Mus musculus (Mouse).